The chain runs to 219 residues: Octanoyltransferase (219 aa).

Positions 32–207 (ENSQDEIWIV…TLSQELGLDK (176 aa)) constitute a BPL/LPL catalytic domain. Substrate contacts are provided by residues 71–78 (RGGQVTYH), 138–140 (SLG), and 151–153 (GLA). Residue Cys169 is the Acyl-thioester intermediate of the active site.

This sequence belongs to the LipB family.

Its subcellular location is the cytoplasm. The enzyme catalyses octanoyl-[ACP] + L-lysyl-[protein] = N(6)-octanoyl-L-lysyl-[protein] + holo-[ACP] + H(+). It participates in protein modification; protein lipoylation via endogenous pathway; protein N(6)-(lipoyl)lysine from octanoyl-[acyl-carrier-protein]: step 1/2. Catalyzes the transfer of endogenously produced octanoic acid from octanoyl-acyl-carrier-protein onto the lipoyl domains of lipoate-dependent enzymes. Lipoyl-ACP can also act as a substrate although octanoyl-ACP is likely to be the physiological substrate. The protein is Octanoyltransferase of Shewanella halifaxensis (strain HAW-EB4).